The chain runs to 79 residues: Small ribosomal subunit protein uS17 (79 aa).

The protein belongs to the universal ribosomal protein uS17 family. In terms of assembly, part of the 30S ribosomal subunit.

In terms of biological role, one of the primary rRNA binding proteins, it binds specifically to the 5'-end of 16S ribosomal RNA. The chain is Small ribosomal subunit protein uS17 from Orientia tsutsugamushi (strain Boryong) (Rickettsia tsutsugamushi).